The following is a 237-amino-acid chain: Thiamine-phosphate synthase (237 aa).

Residues 57-61 (QLRDK) and Asn-98 each bind 4-amino-2-methyl-5-(diphosphooxymethyl)pyrimidine. Mg(2+) is bound by residues Asp-99 and Asp-118. Residue Ser-136 participates in 4-amino-2-methyl-5-(diphosphooxymethyl)pyrimidine binding. Position 162-164 (162-164 (TPT)) interacts with 2-[(2R,5Z)-2-carboxy-4-methylthiazol-5(2H)-ylidene]ethyl phosphate. Lys-165 is a 4-amino-2-methyl-5-(diphosphooxymethyl)pyrimidine binding site. 2-[(2R,5Z)-2-carboxy-4-methylthiazol-5(2H)-ylidene]ethyl phosphate is bound at residue Gly-193.

This sequence belongs to the thiamine-phosphate synthase family. The cofactor is Mg(2+).

It carries out the reaction 2-[(2R,5Z)-2-carboxy-4-methylthiazol-5(2H)-ylidene]ethyl phosphate + 4-amino-2-methyl-5-(diphosphooxymethyl)pyrimidine + 2 H(+) = thiamine phosphate + CO2 + diphosphate. It catalyses the reaction 2-(2-carboxy-4-methylthiazol-5-yl)ethyl phosphate + 4-amino-2-methyl-5-(diphosphooxymethyl)pyrimidine + 2 H(+) = thiamine phosphate + CO2 + diphosphate. The enzyme catalyses 4-methyl-5-(2-phosphooxyethyl)-thiazole + 4-amino-2-methyl-5-(diphosphooxymethyl)pyrimidine + H(+) = thiamine phosphate + diphosphate. It participates in cofactor biosynthesis; thiamine diphosphate biosynthesis; thiamine phosphate from 4-amino-2-methyl-5-diphosphomethylpyrimidine and 4-methyl-5-(2-phosphoethyl)-thiazole: step 1/1. Functionally, condenses 4-methyl-5-(beta-hydroxyethyl)thiazole monophosphate (THZ-P) and 2-methyl-4-amino-5-hydroxymethyl pyrimidine pyrophosphate (HMP-PP) to form thiamine monophosphate (TMP). The chain is Thiamine-phosphate synthase from Mycolicibacterium gilvum (strain PYR-GCK) (Mycobacterium gilvum (strain PYR-GCK)).